Here is a 218-residue protein sequence, read N- to C-terminus: Adenylate kinase (218 aa).

Residue 10–15 participates in ATP binding; sequence GAGKGT. Residues 30–59 form an NMP region; sequence STGDIFREAIAKGTELGRKVQDIVNSGNLV. Residues Thr-31, Arg-36, 57-59, 85-88, and Gln-92 each bind AMP; these read NLV and GYPR. The segment at 126–163 is LID; the sequence is TRRVCSKCGKVYNVITLPSKVEGICDDCGGTLIQRDDD. Arg-127 contacts ATP. The Zn(2+) site is built by Cys-130 and Cys-133. An ATP-binding site is contributed by 136–137; the sequence is VY. 2 residues coordinate Zn(2+): Cys-150 and Cys-153. Residues Arg-160 and Arg-171 each coordinate AMP. ATP is bound at residue Lys-199.

This sequence belongs to the adenylate kinase family. In terms of assembly, monomer.

It is found in the cytoplasm. The catalysed reaction is AMP + ATP = 2 ADP. Its pathway is purine metabolism; AMP biosynthesis via salvage pathway; AMP from ADP: step 1/1. In terms of biological role, catalyzes the reversible transfer of the terminal phosphate group between ATP and AMP. Plays an important role in cellular energy homeostasis and in adenine nucleotide metabolism. The chain is Adenylate kinase from Fervidobacterium nodosum (strain ATCC 35602 / DSM 5306 / Rt17-B1).